Reading from the N-terminus, the 238-residue chain is Heme oxygenase (238 aa).

A heme b-binding site is contributed by H17.

The protein belongs to the heme oxygenase family.

The protein localises to the plastid. Its subcellular location is the chloroplast. It carries out the reaction heme b + 3 reduced [NADPH--hemoprotein reductase] + 3 O2 = biliverdin IXalpha + CO + Fe(2+) + 3 oxidized [NADPH--hemoprotein reductase] + 3 H2O + H(+). Its function is as follows. Catalyzes the opening of the heme ring with the release of iron. Key enzyme in the synthesis of the chromophoric part of the photosynthetic antennae. The polypeptide is Heme oxygenase (pbsA) (Pyropia yezoensis (Susabi-nori)).